The following is a 310-amino-acid chain: N-acetyl-gamma-glutamyl-phosphate reductase (310 aa).

The active site involves Cys117.

The protein belongs to the NAGSA dehydrogenase family. Type 2 subfamily.

It is found in the cytoplasm. The catalysed reaction is N-acetyl-L-glutamate 5-semialdehyde + phosphate + NADP(+) = N-acetyl-L-glutamyl 5-phosphate + NADPH + H(+). It participates in amino-acid biosynthesis; L-arginine biosynthesis; N(2)-acetyl-L-ornithine from L-glutamate: step 3/4. Catalyzes the NADPH-dependent reduction of N-acetyl-5-glutamyl phosphate to yield N-acetyl-L-glutamate 5-semialdehyde. This Brucella melitensis biotype 1 (strain ATCC 23456 / CCUG 17765 / NCTC 10094 / 16M) protein is N-acetyl-gamma-glutamyl-phosphate reductase.